Here is a 213-residue protein sequence, read N- to C-terminus: Orotate phosphoribosyltransferase (213 aa).

A 5-phospho-alpha-D-ribose 1-diphosphate-binding site is contributed by lysine 26. Position 34–35 (34–35) interacts with orotate; that stretch reads FF. Residues 72–73, arginine 99, lysine 100, lysine 103, histidine 105, and 124–132 contribute to the 5-phospho-alpha-D-ribose 1-diphosphate site; these read YK and DDVITAGTA. Positions 128 and 156 each coordinate orotate.

It belongs to the purine/pyrimidine phosphoribosyltransferase family. PyrE subfamily. In terms of assembly, homodimer. The cofactor is Mg(2+).

It catalyses the reaction orotidine 5'-phosphate + diphosphate = orotate + 5-phospho-alpha-D-ribose 1-diphosphate. Its pathway is pyrimidine metabolism; UMP biosynthesis via de novo pathway; UMP from orotate: step 1/2. In terms of biological role, catalyzes the transfer of a ribosyl phosphate group from 5-phosphoribose 1-diphosphate to orotate, leading to the formation of orotidine monophosphate (OMP). The sequence is that of Orotate phosphoribosyltransferase from Salmonella agona (strain SL483).